A 492-amino-acid chain; its full sequence is Acetyl-coenzyme A carboxylase carboxyl transferase subunit beta, chloroplastic (492 aa).

Residues 198 to 219 (STNGSDLTISESSNESESSNES) form a disordered region. Positions 228–492 (LWVQCENCYG…FHGRFPLNQN (265 aa)) constitute a CoA carboxyltransferase N-terminal domain. Positions 232, 235, 251, and 254 each coordinate Zn(2+). The C4-type zinc finger occupies 232 to 254 (CENCYGLNYKKFLKSKMYLCEQC).

The protein belongs to the AccD/PCCB family. In terms of assembly, acetyl-CoA carboxylase is a heterohexamer composed of biotin carboxyl carrier protein, biotin carboxylase and 2 subunits each of ACCase subunit alpha and ACCase plastid-coded subunit beta (accD). Zn(2+) is required as a cofactor.

The protein resides in the plastid. It localises to the chloroplast stroma. The enzyme catalyses N(6)-carboxybiotinyl-L-lysyl-[protein] + acetyl-CoA = N(6)-biotinyl-L-lysyl-[protein] + malonyl-CoA. Its pathway is lipid metabolism; malonyl-CoA biosynthesis; malonyl-CoA from acetyl-CoA: step 1/1. Component of the acetyl coenzyme A carboxylase (ACC) complex. Biotin carboxylase (BC) catalyzes the carboxylation of biotin on its carrier protein (BCCP) and then the CO(2) group is transferred by the transcarboxylase to acetyl-CoA to form malonyl-CoA. The protein is Acetyl-coenzyme A carboxylase carboxyl transferase subunit beta, chloroplastic of Citrus sinensis (Sweet orange).